We begin with the raw amino-acid sequence, 570 residues long: MSEKHPGPLVVEGKLSDAERMKLESNYLRGTIAEDLNDGLTGGFKGDNFLLIRFHGMYQQDDRDIRAERAEQKLEPRHAMLLRCRLPGGVITTTQWQAIDKFAADNTIYGSIRLTNRQTFQFHGILKKNVKPVHQMLHSVGLDALATANDMNRNVLCTSNPYESQLHAEAYEWAKKISEHLLPRTRAYAEIWLDQEKVATTDEEPILGQTYLPRKFKTTVVIPPQNDIDLHANDMNFVAIAENGKLVGFNLLVGGGLSIEHGNKKTYARTASEFGYLPLEHTLAVAEAVVTTQRDWGNRTDRKNAKTKYTLERVGLETFKAEVERRAGIKFEPIRPYEFTGRGDRIGWVKGIDNNWHLTLFIENGRILDYPGRPLKTGLLEIAKIHQGEFRITANQNLIIASVPESQKAKIETLARDHGLMNAVSAQRENSMACVSFPTCPLAMAEAERFLPSFTDKVEAILEKHGIPDEHIVMRVTGCPNGCGRAMLAEIGLVGKAPGRYNLHLGGNRIGTRIPRMYQENITEPDILASLDELIGRWAKEREAGEGFGDFTVRAGIIRPVLDPARDFWE.

4 residues coordinate [4Fe-4S] cluster: Cys-434, Cys-440, Cys-479, and Cys-483. Cys-483 contributes to the siroheme binding site.

The protein belongs to the nitrite and sulfite reductase 4Fe-4S domain family. In terms of assembly, alpha(8)-beta(8). The alpha component is a flavoprotein, the beta component is a hemoprotein. It depends on siroheme as a cofactor. [4Fe-4S] cluster serves as cofactor.

It catalyses the reaction hydrogen sulfide + 3 NADP(+) + 3 H2O = sulfite + 3 NADPH + 4 H(+). It functions in the pathway sulfur metabolism; hydrogen sulfide biosynthesis; hydrogen sulfide from sulfite (NADPH route): step 1/1. In terms of biological role, component of the sulfite reductase complex that catalyzes the 6-electron reduction of sulfite to sulfide. This is one of several activities required for the biosynthesis of L-cysteine from sulfate. This Salmonella dublin (strain CT_02021853) protein is Sulfite reductase [NADPH] hemoprotein beta-component.